The primary structure comprises 251 residues: Endoglucanase CX (251 aa).

The protein belongs to the glycosyl hydrolase 9 (cellulase E) family.

It carries out the reaction Endohydrolysis of (1-&gt;4)-beta-D-glucosidic linkages in cellulose, lichenin and cereal beta-D-glucans.. In terms of biological role, degrades carboxymethylcellulose (CMC). The chain is Endoglucanase CX from Prunus persica (Peach).